Reading from the N-terminus, the 235-residue chain is Claudin-16 (235 aa).

Residues 1-3 lie on the Cytoplasmic side of the membrane; sequence MKD. Residues 4–24 traverse the membrane as a helical segment; that stretch reads LLQYAACFLAIFSTGFLIVAT. Residues 25–79 lie on the Extracellular side of the membrane; it reads RTDCWMVNADDSLEVSTKCRGLWWECVTNAFDGIRTCDEYDSIYAEHPLKLVVTR. The chain crosses the membrane as a helical span at residues 80–100; sequence ALMITADILAGFGFITLLLGL. The Cytoplasmic segment spans residues 101 to 115; sequence DCVKFLPDEPHIKVR. The helical transmembrane segment at 116–136 threads the bilayer; the sequence is LCFVAGTVLLIAGTPGIIGSV. Residues 137–169 lie on the Extracellular side of the membrane; sequence WYAVDVYVERSSLVLHNIFLGIQYKFGWSCWLG. The chain crosses the membrane as a helical span at residues 170-190; the sequence is MAGSLGCFLAGALLTCCLYLF. The Cytoplasmic segment spans residues 191-235; the sequence is KDVGPERNYPYAMRKPYSTAGVSMAKSYKAPRTETAKMYAVDTRV. Positions 233 to 235 match the Interaction with TJP1 motif; that stretch reads TRV.

Belongs to the claudin family. In terms of assembly, can form heteropolymeric tight junction strands with other claudins. Interacts with CLDN19. Interacts (via PDZ-binding motif TRV) with TJP1 (via PDZ domain). Cannot form tight junction strands on its own.

It localises to the cell junction. Its subcellular location is the tight junction. The protein resides in the cell membrane. The catalysed reaction is Mg(2+)(in) = Mg(2+)(out). It carries out the reaction Ca(2+)(in) = Ca(2+)(out). The enzyme catalyses Na(+)(in) = Na(+)(out). It catalyses the reaction K(+)(in) = K(+)(out). The catalysed reaction is Rb(+)(in) = Rb(+)(out). It carries out the reaction Cs(+)(in) = Cs(+)(out). The enzyme catalyses Li(+)(in) = Li(+)(out). Forms paracellular channels: coassembles with CLDN19 into tight junction strands with cation-selective channels through the strands, conveying epithelial permeability in a process known as paracellular tight junction permeability. Involved in the maintenance of ion gradients along the nephron. In the thick ascending limb (TAL) of Henle's loop, facilitates sodium paracellular permeability from the interstitial compartment to the lumen, contributing to the lumen-positive transepithelial potential that drives paracellular magnesium and calcium reabsorption. The protein is Claudin-16 of Rattus norvegicus (Rat).